The chain runs to 131 residues: UPF0102 protein AZC_4471 (131 aa).

Belongs to the UPF0102 family.

The protein is UPF0102 protein AZC_4471 of Azorhizobium caulinodans (strain ATCC 43989 / DSM 5975 / JCM 20966 / LMG 6465 / NBRC 14845 / NCIMB 13405 / ORS 571).